The primary structure comprises 1024 residues: MTMITDSLAVVLQRRDWENPGVTQLNRLAAHPPFASWRNSEEARTDRPSQQLRSLNGEWRFAWFPAPEAVPESWLECDLPDADTVVVPSNWQMHGYDAPIYTNVTYPITVNPPFVPAENPTGCYSLTFNIDESWLQEGQTRIIFDGVNSAFHLWCNGRWVGYGQDSRLPSEFDLSAFLRAGENRLAVMVLRWSDGSYLEDQDMWRMSGIFRDVSLLHKPTTQISDFQVTTRFNDDFSRAVLEAEVQMYGELRDELRVTVSLWQGETQVASGTAPFGGEIIDERGGYADRVTLRLNVENPELWSAEIPNLYRAVVELHTADGTLIEAEACDVGFREVRIENGLLLLNGKPLLIRGVNRHEHHPLHGQVMDEQTMVQDILLMKQNNFNAVRCSHYPNHPLWYTLCDRYGLYVVDEANIETHGMVPMNRLTDDPRWLPAMSERVTRMVQRDRNHPSVIIWSLGNESGHGANHDALYRWIKSVDPSRPVQYEGGGADTTATDIICPMYARVDEDQPFPAVPKWSIKKWLSLPGEMRPLILCEYAHAMGNSLGGFAKYWQAFRQYPRLQGGFVWDWVDQSLIKYDENGNPWSAYGGDFGDTPNDRQFCMNGLVFADRTPHPALTEAKHQQQFFQFRLSGRTIEVTSEYLFRHSDNEFLHWMVALDGKPLASGEVPLDVGPQGKQLIELPELPQPESAGQLWLTVRVVQPNATAWSEAGHISAWQQWRLAENLSVTLPSASHAIPQLTTSGTDFCIELGNKRWQFNRQSGFLSQMWIGDEKQLLTPLRDQFTRAPLDNDIGVSEATRIDPNAWVERWKAAGHYQAEAALLQCTADTLADAVLITTAHAWQHQGKTLFISRKTYRIDGHGEMVINVDVAVASDTPHPARVGLTCQLAQVAERVNWLGLGPQENYPDRLTAACFDRWDLPLSDMYTPYVFPSENGLRCGTRELNYGPHQWRGDFQFNISRYSQQQLMETSHRHLLHAEEGTWLNIDGFHMGIGGDDSWSPSVSAEFQLSAGHYHYQLVWCQK.

Residues Asn103 and Asp202 each coordinate substrate. Asp202 provides a ligand contact to Na(+). Positions 417, 419, and 462 each coordinate Mg(2+). Substrate-binding positions include Glu462 and 538-541 (EYAH). Catalysis depends on Glu462, which acts as the Proton donor. The active-site Nucleophile is the Glu538. Position 598 (Asn598) interacts with Mg(2+). Residues Phe602 and Asn605 each coordinate Na(+). 2 residues coordinate substrate: Asn605 and Trp1000.

The protein belongs to the glycosyl hydrolase 2 family. As to quaternary structure, homotetramer. Requires Mg(2+) as cofactor. Na(+) serves as cofactor.

The catalysed reaction is Hydrolysis of terminal non-reducing beta-D-galactose residues in beta-D-galactosides.. The chain is Beta-galactosidase from Escherichia coli O6:K15:H31 (strain 536 / UPEC).